The sequence spans 678 residues: Dol-P-Man:Man(7)GlcNAc(2)-PP-Dol alpha-1,6-mannosyltransferase (678 aa).

Transmembrane regions (helical) follow at residues 1–21, 56–76, 81–101, 109–129, 133–153, 168–188, 200–220, 252–272, 279–299, 301–321, and 334–354; these read MDIL…FTKV, FIGP…FETL, FWAQ…AWNS, IYGV…FHFM, TRPL…AYWL, ILVF…VSLL, VALP…SFFW, FYSA…IGVA, PLVL…HKEL, FIIY…QRIW, and ALAC…LLVI.

The protein belongs to the glycosyltransferase 22 family.

The protein localises to the endoplasmic reticulum membrane. The enzyme catalyses an alpha-D-Man-(1-&gt;2)-alpha-D-Man-(1-&gt;2)-alpha-D-Man-(1-&gt;3)-[alpha-D-Man-(1-&gt;2)-alpha-D-Man-(1-&gt;3)-alpha-D-Man-(1-&gt;6)]-beta-D-Man-(1-&gt;4)-beta-D-GlcNAc-(1-&gt;4)-alpha-D-GlcNAc-diphospho-di-trans,poly-cis-dolichol + a di-trans,poly-cis-dolichyl beta-D-mannosyl phosphate = an alpha-D-Man-(1-&gt;2)-alpha-D-Man-(1-&gt;2)-alpha-D-Man-(1-&gt;3)-[alpha-D-Man-(1-&gt;2)-alpha-D-Man-(1-&gt;3)-[alpha-D-Man-(1-&gt;6)]-alpha-D-Man-(1-&gt;6)]-beta-D-Man-(1-&gt;4)-beta-D-GlcNAc-(1-&gt;4)-alpha-D-GlcNAc-diphospho-di-trans,poly-cis-dolichol + a di-trans,poly-cis-dolichyl phosphate + H(+). The protein operates within protein modification; protein glycosylation. In terms of biological role, mannosyltransferase that operates in the biosynthetic pathway of dolichol-linked oligosaccharides, the glycan precursors employed in protein asparagine (N)-glycosylation. The assembly of dolichol-linked oligosaccharides begins on the cytosolic side of the endoplasmic reticulum membrane and finishes in its lumen. The sequential addition of sugars to dolichol pyrophosphate produces dolichol-linked oligosaccharides containing fourteen sugars, including two GlcNAcs, nine mannoses and three glucoses. Once assembled, the oligosaccharide is transferred from the lipid to nascent proteins by oligosaccharyltransferases. In the lumen of the endoplasmic reticulum, adds the eighth mannose residue in an alpha-1,6 linkage onto Man(7)GlcNAc(2)-PP-dolichol to produce Man(8)GlcNAc(2)-PP-dolichol. The sequence is that of Dol-P-Man:Man(7)GlcNAc(2)-PP-Dol alpha-1,6-mannosyltransferase from Drosophila melanogaster (Fruit fly).